The following is a 495-amino-acid chain: Aspartyl/glutamyl-tRNA(Asn/Gln) amidotransferase subunit B (495 aa).

Belongs to the GatB/GatE family. GatB subfamily. Heterotrimer of A, B and C subunits.

It carries out the reaction L-glutamyl-tRNA(Gln) + L-glutamine + ATP + H2O = L-glutaminyl-tRNA(Gln) + L-glutamate + ADP + phosphate + H(+). It catalyses the reaction L-aspartyl-tRNA(Asn) + L-glutamine + ATP + H2O = L-asparaginyl-tRNA(Asn) + L-glutamate + ADP + phosphate + 2 H(+). In terms of biological role, allows the formation of correctly charged Asn-tRNA(Asn) or Gln-tRNA(Gln) through the transamidation of misacylated Asp-tRNA(Asn) or Glu-tRNA(Gln) in organisms which lack either or both of asparaginyl-tRNA or glutaminyl-tRNA synthetases. The reaction takes place in the presence of glutamine and ATP through an activated phospho-Asp-tRNA(Asn) or phospho-Glu-tRNA(Gln). In Methylocella silvestris (strain DSM 15510 / CIP 108128 / LMG 27833 / NCIMB 13906 / BL2), this protein is Aspartyl/glutamyl-tRNA(Asn/Gln) amidotransferase subunit B.